The primary structure comprises 341 residues: GTPase Obg (341 aa).

The Obg domain occupies 1–159 (MKFLDQAKIY…RTIWLRLKLI (159 aa)). The OBG-type G domain maps to 160–327 (ADAGLVGLPN…TLRQLARIID (168 aa)). Residues 166-173 (GLPNAGKS), 191-195 (FTTLH), 212-215 (DIPG), 279-282 (SQVD), and 308-310 (SAV) contribute to the GTP site. Ser-173 and Thr-193 together coordinate Mg(2+).

Belongs to the TRAFAC class OBG-HflX-like GTPase superfamily. OBG GTPase family. As to quaternary structure, monomer. The cofactor is Mg(2+).

The protein resides in the cytoplasm. In terms of biological role, an essential GTPase which binds GTP, GDP and possibly (p)ppGpp with moderate affinity, with high nucleotide exchange rates and a fairly low GTP hydrolysis rate. Plays a role in control of the cell cycle, stress response, ribosome biogenesis and in those bacteria that undergo differentiation, in morphogenesis control. The chain is GTPase Obg from Brucella abortus biovar 1 (strain 9-941).